Here is a 112-residue protein sequence, read N- to C-terminus: UPF0102 protein TTHA0372 (112 aa).

Belongs to the UPF0102 family.

This Thermus thermophilus (strain ATCC 27634 / DSM 579 / HB8) protein is UPF0102 protein TTHA0372.